A 337-amino-acid polypeptide reads, in one-letter code: DNA-directed RNA polymerase subunit alpha (337 aa).

Residues 1-231 (MRNITTSAYT…KQLSVFDKIT (231 aa)) are alpha N-terminal domain (alpha-NTD). An alpha C-terminal domain (alpha-CTD) region spans residues 248–337 (NTKLLQNITD…IAELKAQNEG (90 aa)).

This sequence belongs to the RNA polymerase alpha chain family. In terms of assembly, homodimer. The RNAP catalytic core consists of 2 alpha, 1 beta, 1 beta' and 1 omega subunit. When a sigma factor is associated with the core the holoenzyme is formed, which can initiate transcription.

The enzyme catalyses RNA(n) + a ribonucleoside 5'-triphosphate = RNA(n+1) + diphosphate. Its function is as follows. DNA-dependent RNA polymerase catalyzes the transcription of DNA into RNA using the four ribonucleoside triphosphates as substrates. The chain is DNA-directed RNA polymerase subunit alpha from Campylobacter jejuni subsp. jejuni serotype O:6 (strain 81116 / NCTC 11828).